Reading from the N-terminus, the 241-residue chain is MINLNTNDNLTNAYEIARYIKEAKKSTPVKAYVQGKIQVEEEEGLKIFGSEDFKILIGELEVVEKVIEQNKDRIKYYHLEYDRRNSAIPLLDITHLDARIEPGAIIRDKVKIGKNAVIMMGAVINIGAEIGENSMIDMNAVIGARGIIGKNVHVGAGAVIAGVLEPPSSVPVVIEDNVMIGANAVILEGVRVGRGAVVAAGSVVIEDVPPNTVVAGVPAKIVKVVDEKTREKTKLMEDLRG.

This sequence belongs to the transferase hexapeptide repeat family. DapH subfamily.

The enzyme catalyses (S)-2,3,4,5-tetrahydrodipicolinate + acetyl-CoA + H2O = L-2-acetamido-6-oxoheptanedioate + CoA. The protein operates within amino-acid biosynthesis; L-lysine biosynthesis via DAP pathway; LL-2,6-diaminopimelate from (S)-tetrahydrodipicolinate (acetylase route): step 1/3. Functionally, catalyzes the transfer of an acetyl group from acetyl-CoA to tetrahydrodipicolinate. This Caldanaerobacter subterraneus subsp. tengcongensis (strain DSM 15242 / JCM 11007 / NBRC 100824 / MB4) (Thermoanaerobacter tengcongensis) protein is 2,3,4,5-tetrahydropyridine-2,6-dicarboxylate N-acetyltransferase.